The following is an 816-amino-acid chain: Fibroblast growth factor receptor 1 (816 aa).

A signal peptide spans 1 to 23; sequence MLSWRHLVFWAMLVMATLSAARP. Topologically, residues 24–374 are extracellular; it reads APTLPEQVSP…VIMTSPLYLE (351 aa). The Ig-like C2-type 1 domain maps to 25–118; the sequence is PTLPEQVSPK…ETTFFAVNVS (94 aa). C54 and C100 are joined by a disulfide. N-linked (GlcNAc...) asparagine glycosylation is found at N76 and N116. The segment at 118–152 is disordered; the sequence is SDRIPSVEDDDDDDEKSSSEEKEAENSKPNPVAPF. Over residues 133-143 the composition is skewed to basic and acidic residues; sequence KSSSEEKEAEN. Ig-like C2-type domains are found at residues 156 to 244 and 253 to 355; these read PEKM…YQLD and PILQ…AWLT. The cysteines at positions 176 and 228 are disulfide-linked. N-linked (GlcNAc...) asparagine glycans are attached at residues N238, N262, N294, N315, and N328. C275 and C339 form a disulfide bridge. The chain crosses the membrane as a helical span at residues 375 to 395; that stretch reads IIIYCTGAFLISCMLVTVIIY. Residues 396-816 lie on the Cytoplasmic side of the membrane; the sequence is KMKNTTKKTD…QHANGGLKKR (421 aa). Y459 carries the post-translational modification Phosphotyrosine; by autocatalysis. Residues 474–763 enclose the Protein kinase domain; that stretch reads LILGKPLGEG…VAMTSNQEYL (290 aa). ATP-binding positions include 480–486, K510, 558–560, and N564; these read LGEGCFG and EYA. 2 positions are modified to phosphotyrosine; by autocatalysis: Y579 and Y581. D619 functions as the Proton acceptor in the catalytic mechanism. The ATP site is built by R623 and D637. Residues Y649, Y650, Y726, and Y762 each carry the phosphotyrosine; by autocatalysis modification. The segment at 776-816 is disordered; that stretch reads FPDTRSSTCSSGEDSVFSHDPLPDEPCLPKYQHANGGLKKR. Polar residues predominate over residues 779–788; sequence TRSSTCSSGE.

This sequence belongs to the protein kinase superfamily. Tyr protein kinase family. Fibroblast growth factor receptor subfamily. In terms of assembly, monomer. Homodimer after ligand binding. Autophosphorylated. Binding of FGF family members together with heparan sulfate proteoglycan or heparin promotes receptor dimerization and autophosphorylation on tyrosine residues. Autophosphorylation occurs in trans between the two FGFR molecules present in the dimer and proceeds in a highly ordered manner. Phosphotyrosine residues provide docking sites for interacting proteins and so are crucial for FGFR1 function and its regulation. Post-translationally, ubiquitinated. FGFR1 is rapidly ubiquitinated after autophosphorylation, leading to internalization and degradation. In terms of processing, N-glycosylated in the endoplasmic reticulum. The N-glycan chains undergo further maturation to an Endo H-resistant form in the Golgi apparatus.

Its subcellular location is the cell membrane. The protein resides in the nucleus. The protein localises to the cytoplasm. It localises to the cytosol. It is found in the cytoplasmic vesicle. The catalysed reaction is L-tyrosyl-[protein] + ATP = O-phospho-L-tyrosyl-[protein] + ADP + H(+). Its activity is regulated as follows. Present in an inactive conformation in the absence of bound ligand. Ligand binding leads to dimerization and activation by sequential autophosphorylation on tyrosine residues. In terms of biological role, tyrosine-protein kinase that acts as a cell-surface receptor for fibroblast growth factors and plays an essential role in the regulation of embryonic development, cell proliferation, differentiation and migration. Required for normal mesoderm patterning and normal skeletogenesis. Phosphorylates PLCG1, FRS2, GAB1 and SHB. Ligand binding leads to the activation of several signaling cascades. Activation of PLCG1 leads to the production of the cellular signaling molecules diacylglycerol and inositol-1,4,5-trisphosphate. Phosphorylation of FRS2 triggers recruitment of GRB2, GAB1, PIK3R1 and SOS1, and mediates activation of RAS, MAPK1/ERK2, MAPK3/ERK1 and the MAP kinase signaling pathway, as well as of the AKT1 signaling pathway. Promotes phosphorylation of SHC1, STAT1 and PTPN11/SHP2. In the nucleus, enhances RPS6KA1 and CREB1 activity and contributes to the regulation of transcription. FGFR1 signaling is down-regulated by ubiquitination, internalization and degradation. This chain is Fibroblast growth factor receptor 1 (FGFR1), found in Pleurodeles waltl (Iberian ribbed newt).